Here is a 367-residue protein sequence, read N- to C-terminus: Peptide chain release factor 2 (367 aa).

N5-methylglutamine is present on glutamine 254.

The protein belongs to the prokaryotic/mitochondrial release factor family. Methylated by PrmC. Methylation increases the termination efficiency of RF2.

The protein resides in the cytoplasm. Peptide chain release factor 2 directs the termination of translation in response to the peptide chain termination codons UGA and UAA. The polypeptide is Peptide chain release factor 2 (Aromatoleum aromaticum (strain DSM 19018 / LMG 30748 / EbN1) (Azoarcus sp. (strain EbN1))).